The sequence spans 85 residues: Elongation factor 1-beta (85 aa).

It belongs to the EF-1-beta/EF-1-delta family.

Promotes the exchange of GDP for GTP in EF-1-alpha/GDP, thus allowing the regeneration of EF-1-alpha/GTP that could then be used to form the ternary complex EF-1-alpha/GTP/AAtRNA. The protein is Elongation factor 1-beta of Methanospirillum hungatei JF-1 (strain ATCC 27890 / DSM 864 / NBRC 100397 / JF-1).